We begin with the raw amino-acid sequence, 62 residues long: Lepidopteran-selective toxin (62 aa).

The first 24 residues, 1 to 24 (MKFLYGVILIALFLTVMTATLSEA), serve as a signal peptide directing secretion. Intrachain disulfides connect Cys26/Cys43, Cys29/Cys51, Cys40/Cys56, and Cys44/Cys58. Tyr62 is a propeptide.

This sequence belongs to the short scorpion toxin superfamily. Chloride channel inhibitor family. Expressed by the venom gland.

It is found in the secreted. Its function is as follows. Toxin with unknown function in healthy organisms. On glioma cells, interacts with chloride channels (probably ClC-3/CLCN3) and MMP2 at the surface of glioma cells. This complex is then internalized via caveolae, thus inhibiting the chloride channels necessary for cell shrinkage and tumor propagation. Induces flaccid paralysis in H.virescens larvae. Is not toxic to S.falculata larvae or mice. In Hottentotta tamulus (Eastern Indian scorpion), this protein is Lepidopteran-selective toxin.